Here is a 110-residue protein sequence, read N- to C-terminus: BolA-like protein 3 (110 aa).

It belongs to the BolA/IbaG family. In terms of assembly, interacts with NFU1.

Its subcellular location is the mitochondrion. Functionally, acts as a mitochondrial iron-sulfur (Fe-S) cluster assembly factor that facilitates (Fe-S) cluster insertion into a subset of mitochondrial proteins. Probably acts together with NFU1. In Bos taurus (Bovine), this protein is BolA-like protein 3 (BOLA3).